Reading from the N-terminus, the 461-residue chain is UDP-N-acetylmuramoylalanine--D-glutamate ligase (461 aa).

123 to 129 is a binding site for ATP; that stretch reads GTNGKTT.

This sequence belongs to the MurCDEF family.

The protein localises to the cytoplasm. It catalyses the reaction UDP-N-acetyl-alpha-D-muramoyl-L-alanine + D-glutamate + ATP = UDP-N-acetyl-alpha-D-muramoyl-L-alanyl-D-glutamate + ADP + phosphate + H(+). Its pathway is cell wall biogenesis; peptidoglycan biosynthesis. Cell wall formation. Catalyzes the addition of glutamate to the nucleotide precursor UDP-N-acetylmuramoyl-L-alanine (UMA). In Natranaerobius thermophilus (strain ATCC BAA-1301 / DSM 18059 / JW/NM-WN-LF), this protein is UDP-N-acetylmuramoylalanine--D-glutamate ligase.